The following is a 1028-amino-acid chain: Pentatricopeptide repeat-containing protein At3g09040, mitochondrial (1028 aa).

Residues 1–30 (MYFRVLLTPSSAMFDSFSFVRRLSYSPDLG) constitute a mitochondrion transit peptide. PPR repeat units lie at residues 94-123 (EGRL…FLEK), 124-158 (DVTA…QIFP), 159-193 (NKFT…GLER), 194-224 (NSYC…IVDP), 225-259 (NTVC…GHRP), 260-290 (DHLA…MSSP), 291-325 (DVVA…SVKS), 326-360 (TRST…GLAS), 361-391 (NIYV…LEEK), 392-426 (NDVF…GYNI), 427-461 (DDFT…KLAK), 462-492 (NLFV…MCDR), 493-527 (DNVT…GIVS), 528-562 (DGAC…GLDR), 563-593 (DLHT…LPEW), 594-627 (SVVS…GVNP), 628-662 (SEIT…GFSS), 664-694 (GEYL…LSSP), 696-730 (SIVL…GVLP), 731-765 (DQAT…AHDL), 766-796 (DELT…MRRR), 798-832 (NVVS…HIMP), 833-863 (DEIT…MIGQ), and 869-899 (RVDH…QNLK). A type E motif region spans residues 904–979 (LWSSLLGACR…VPGYSWIDVE (76 aa)). Residues 980–1010 (QRTHIFAAGDKSHSEIGKIEMFLEDLYDLMK) form a type E(+) motif region.

The protein belongs to the PPR family. PCMP-E subfamily.

Its subcellular location is the mitochondrion. In Arabidopsis thaliana (Mouse-ear cress), this protein is Pentatricopeptide repeat-containing protein At3g09040, mitochondrial (PCMP-E88).